A 365-amino-acid chain; its full sequence is Probable caffeine synthase 4 (365 aa).

Tyr18 is a binding site for S-adenosyl-L-homocysteine. Residue Thr25 participates in caffeine binding. Residues Cys61, Asn66, Asp98, Leu99, Ser134, and Phe135 each coordinate S-adenosyl-L-homocysteine. The caffeine site is built by Tyr152, His155, and Trp156. The Mg(2+) site is built by Asn173, Asp259, Phe261, and Asn262. Phe317 serves as a coordination point for caffeine.

Belongs to the methyltransferase superfamily. Type-7 methyltransferase family. It depends on Mg(2+) as a cofactor.

It participates in alkaloid biosynthesis. Its function is as follows. May be involved in the biosynthesis of caffeine. This Camellia sinensis (Tea plant) protein is Probable caffeine synthase 4.